The following is a 36-amino-acid chain: Photosystem I reaction center subunit VIII (36 aa).

A helical transmembrane segment spans residues 8–28 (SILVPLVGLVFPAIAMASLFL).

It belongs to the PsaI family.

Its subcellular location is the plastid. The protein localises to the chloroplast thylakoid membrane. Its function is as follows. May help in the organization of the PsaL subunit. This Vitis vinifera (Grape) protein is Photosystem I reaction center subunit VIII.